Reading from the N-terminus, the 227-residue chain is Thiamine-phosphate synthase (227 aa).

4-amino-2-methyl-5-(diphosphooxymethyl)pyrimidine is bound by residues 46–50 (QLRDK) and asparagine 87. The Mg(2+) site is built by aspartate 88 and aspartate 107. A 4-amino-2-methyl-5-(diphosphooxymethyl)pyrimidine-binding site is contributed by serine 126. Residue 152–154 (TPT) participates in 2-[(2R,5Z)-2-carboxy-4-methylthiazol-5(2H)-ylidene]ethyl phosphate binding. Lysine 155 serves as a coordination point for 4-amino-2-methyl-5-(diphosphooxymethyl)pyrimidine. Glycine 183 is a 2-[(2R,5Z)-2-carboxy-4-methylthiazol-5(2H)-ylidene]ethyl phosphate binding site.

It belongs to the thiamine-phosphate synthase family. Mg(2+) serves as cofactor.

The catalysed reaction is 2-[(2R,5Z)-2-carboxy-4-methylthiazol-5(2H)-ylidene]ethyl phosphate + 4-amino-2-methyl-5-(diphosphooxymethyl)pyrimidine + 2 H(+) = thiamine phosphate + CO2 + diphosphate. It catalyses the reaction 2-(2-carboxy-4-methylthiazol-5-yl)ethyl phosphate + 4-amino-2-methyl-5-(diphosphooxymethyl)pyrimidine + 2 H(+) = thiamine phosphate + CO2 + diphosphate. It carries out the reaction 4-methyl-5-(2-phosphooxyethyl)-thiazole + 4-amino-2-methyl-5-(diphosphooxymethyl)pyrimidine + H(+) = thiamine phosphate + diphosphate. It participates in cofactor biosynthesis; thiamine diphosphate biosynthesis; thiamine phosphate from 4-amino-2-methyl-5-diphosphomethylpyrimidine and 4-methyl-5-(2-phosphoethyl)-thiazole: step 1/1. In terms of biological role, condenses 4-methyl-5-(beta-hydroxyethyl)thiazole monophosphate (THZ-P) and 2-methyl-4-amino-5-hydroxymethyl pyrimidine pyrophosphate (HMP-PP) to form thiamine monophosphate (TMP). The sequence is that of Thiamine-phosphate synthase from Mycolicibacterium smegmatis (strain ATCC 700084 / mc(2)155) (Mycobacterium smegmatis).